Here is a 141-residue protein sequence, read N- to C-terminus: Hemoglobin subunit alpha-D (141 aa).

Residues 1–141 (VLTAEDRRLL…VADVLSEKYR (141 aa)) form the Globin domain. Heme b-binding residues include His-57 and His-87.

The protein belongs to the globin family. In terms of assembly, the deoxy-Hb is a heterotetramer of two alpha and two beta chains, but oxygenation results in dissociation to dimers. As to expression, red blood cells.

Involved in oxygen transport from the lung to the various peripheral tissues. This is Hemoglobin subunit alpha-D (HBAD) from Erythrolamprus miliaris (South American water snake).